A 259-amino-acid polypeptide reads, in one-letter code: UPF0246 protein PLES_14941 (259 aa).

It belongs to the UPF0246 family.

In Pseudomonas aeruginosa (strain LESB58), this protein is UPF0246 protein PLES_14941.